Consider the following 74-residue polypeptide: Ferredoxin-like protein in nif region (74 aa).

One can recognise a 4Fe-4S ferredoxin-type domain in the interval 2–30; it reads PFKIIASQCTSCSACEPLCPNVAISEKGG. Residues C10, C13, C16, C20, C39, C51, and C55 each coordinate [4Fe-4S] cluster.

[4Fe-4S] cluster is required as a cofactor.

The protein is Ferredoxin-like protein in nif region (frxA) of Bradyrhizobium diazoefficiens (strain JCM 10833 / BCRC 13528 / IAM 13628 / NBRC 14792 / USDA 110).